Consider the following 354-residue polypeptide: Phospho-N-acetylmuramoyl-pentapeptide-transferase (354 aa).

10 helical membrane passes run 27–47 (ATLLTALVIGLIIGPRFINML), 73–93 (TMGGLMIVTALTLSLLLWMDV), 97–117 (LVWACAVVTLGFGLIGFLDDY), 138–158 (FVVAAFAAWLAVGETNLYVPV), 162–182 (LYVPLGPFYYLFAIFVIVGAG), 193–213 (GLAIMPVIIAAGTFAIIAYLA), 230–250 (AGELAIFCAAMMGAGLAFLWF), 256–276 (AVFMGDTGSLALGGALGVIAV), 282–302 (IVLAIVGGLFVMEAVSVIVQV), and 331–351 (TVVIRFWIVSIVLALIGLATL).

The protein belongs to the glycosyltransferase 4 family. MraY subfamily. The cofactor is Mg(2+).

Its subcellular location is the cell inner membrane. The enzyme catalyses UDP-N-acetyl-alpha-D-muramoyl-L-alanyl-gamma-D-glutamyl-meso-2,6-diaminopimeloyl-D-alanyl-D-alanine + di-trans,octa-cis-undecaprenyl phosphate = di-trans,octa-cis-undecaprenyl diphospho-N-acetyl-alpha-D-muramoyl-L-alanyl-D-glutamyl-meso-2,6-diaminopimeloyl-D-alanyl-D-alanine + UMP. It functions in the pathway cell wall biogenesis; peptidoglycan biosynthesis. Catalyzes the initial step of the lipid cycle reactions in the biosynthesis of the cell wall peptidoglycan: transfers peptidoglycan precursor phospho-MurNAc-pentapeptide from UDP-MurNAc-pentapeptide onto the lipid carrier undecaprenyl phosphate, yielding undecaprenyl-pyrophosphoryl-MurNAc-pentapeptide, known as lipid I. The chain is Phospho-N-acetylmuramoyl-pentapeptide-transferase from Novosphingobium aromaticivorans (strain ATCC 700278 / DSM 12444 / CCUG 56034 / CIP 105152 / NBRC 16084 / F199).